The chain runs to 304 residues: Non-specific ribonucleoside hydrolase RihC (304 aa).

Residue H233 is part of the active site.

It belongs to the IUNH family. RihC subfamily.

Functionally, hydrolyzes both purine and pyrimidine ribonucleosides with a broad-substrate specificity. This Escherichia coli O17:K52:H18 (strain UMN026 / ExPEC) protein is Non-specific ribonucleoside hydrolase RihC.